Consider the following 233-residue polypeptide: 2-C-methyl-D-erythritol 4-phosphate cytidylyltransferase (233 aa).

This sequence belongs to the IspD/TarI cytidylyltransferase family. IspD subfamily.

The catalysed reaction is 2-C-methyl-D-erythritol 4-phosphate + CTP + H(+) = 4-CDP-2-C-methyl-D-erythritol + diphosphate. Its pathway is isoprenoid biosynthesis; isopentenyl diphosphate biosynthesis via DXP pathway; isopentenyl diphosphate from 1-deoxy-D-xylulose 5-phosphate: step 2/6. In terms of biological role, catalyzes the formation of 4-diphosphocytidyl-2-C-methyl-D-erythritol from CTP and 2-C-methyl-D-erythritol 4-phosphate (MEP). In Gloeobacter violaceus (strain ATCC 29082 / PCC 7421), this protein is 2-C-methyl-D-erythritol 4-phosphate cytidylyltransferase.